Here is a 1005-residue protein sequence, read N- to C-terminus: MVKVDLESKRYGEKLKEVFLMLDNNVVECIKEITESSRNGKLVFFVGAGVSTLSDYPQWWRLVDKYHEELYGSPKKGNYSSDEYLRIPQIFYNVKGEMAFDGILKDFFQVDKPTNPIHDKILAMNPAHVITTNYDNLIDTACWKRGKYFSVISAEEDVANATSSRYLLKVHGDFRKGFKGENVVLKEDDYLNYDQNYPLISNLMKTIIATHTIVFIGYGLGDYNINMLLNWVRKLQKDSFHKPFFIRTDPSPIENETLIYYENKGLRIIDAASLIDSNEYDYLERYSAVMDLLIESQENKFITKDDEVIDYIYGKISPLFALQYIRKIDLKHVFEYDYHFEVNGTVVRHKNKGFGYMERFFELKESCDERSKLSKKQYERFNALFNFFEKNGVICMAKDAGTLNTSIEINSLAYHGKYDVMKKFIEEQSVSIEDDYKKAFFLACLGRWEESYDLYSNIILNSIDESNGCVYYLSQINRYRIYQSITQAVTQFNGLGLLTFGRHYKPFTDEFLARIEREMTNFNIDDLFNGMPFEFQKKYKILEFLSDNQFLYDDTVKLFELTNKVRSEMSEGSYSFGMSSDIVVLLRLYDNLRFLYENCLWSVSFHEFHQYIRNSMSLLIEKAEYERTRDIDELGFSFFGKKSGFFMEYYDFVNISRHFKIDDIKNLERSCSIDKIRFGEQEKIEEYLVGIAEEITKQFSANGMNVVFYTQFISEAKAALYFAKYVKLSEEGLGKIVKALLFYFPERDLDIGKRYVWLERLTKCNELPKSIISIIDDFLVLQAEKHIDQNYSEVSSNGLYSRDYGALIKHFEKNFISKRLSEITLCLTQDKQKQIDFLFKLLPLLSTNAKSHLLSFKSVENINDLMNGIRIGLIDEFTPEHEELIIEYLETRKVNYIVEKEKGIQTFSSNDYMSTFGIWYFLEEINNSKMEEFIGMDDQYDFFVDPENFDYKKFIPSWLKNYNDKLLGKIAGNKHMKHHVIEVLKERVKNSNDKRYLEILMNYFI.

Residues 1–295 (MVKVDLESKR…YSAVMDLLIE (295 aa)) form an SIR2 region. The inter-dimer interaction stretch occupies residues 56–111 (YPQWWRLVDKYHEELYGSPKKGNYSSDEYLRIPQIFYNVKGEMAFDGILKDFFQVD). Catalysis depends on residues Tyr134, Asp135, and His171. An MID region spans residues 296 to 548 (SQENKFITKD…YKILEFLSDN (253 aa)). The tract at residues 549–1005 (QFLYDDTVKL…YLEILMNYFI (457 aa)) is CTD.

In terms of assembly, homotetramer (dimer of dimers). Homodimer. The SIR2 domains are arranged in a central core, adopting a head-to-head arrangement, while the CTDs are positioned at the periphery of the complex. Tetramerization is necessary for the activation of NADase activity. The NADase enzymatic activity of this homotetrameric form is autoinhibited. The activated form of DSR2 (after binding to the phage tube protein) exists as tetramers and dimers, with the tetramers exhibiting more NADase activity. Each tetramer binds 4 NAD(+) molecules. (Microbial infection) Interacts (via C-terminus) with phage SPR tail tube monomer protein (via N-terminus) in a 4:4 DSR2-Tube assembly; this interaction induces a conformation change of the tube protein and activates the NADase activity of DSR2. As to quaternary structure, (Microbial infection) Interacts (via C-terminus) with phage SPbeta DSAD1 in a 4:2 ratio; this interaction prevents activation of the NADase defense activity of DSR2.

It catalyses the reaction NAD(+) + H2O = ADP-D-ribose + nicotinamide + H(+). (Microbial infection) NADase activity is activated through the binding of SPR phage tail tube monomer protein. NADase activity is inhibited through the binding to the phage SPbeta DSR anti-defense 1 (DSAD1). Its function is as follows. Anti-phage defense protein that is activated through the binding to the phage tail tube protein monomer and which hydrolyzes NAD+ upon activation (NADase activity). The resulting depletion of NAD(+) leads to an abortive infection. This is Defense-associated sirtuin 2 from Bacillus subtilis.